The sequence spans 631 residues: Probable potassium transport system protein Kup 1 (631 aa).

12 helical membrane-spanning segments follow: residues 17–37 (LALG…LYAL), 55–75 (LSLI…MIIF), 101–121 (PLFY…GMLT), 140–160 (LYPY…SLQA), 166–186 (IGYL…ILGI), 217–237 (FLLG…ADIG), 249–269 (FFIA…NLIV), 277–297 (PFFM…ATVA), 338–358 (IYVP…CLAF), 370–390 (IAVN…AVSI), 395–415 (TFNV…FLGA), and 420–440 (FITG…IMYS).

Belongs to the HAK/KUP transporter (TC 2.A.72) family.

It is found in the cell inner membrane. It carries out the reaction K(+)(in) + H(+)(in) = K(+)(out) + H(+)(out). In terms of biological role, transport of potassium into the cell. Likely operates as a K(+):H(+) symporter. The chain is Probable potassium transport system protein Kup 1 from Legionella pneumophila (strain Corby).